The chain runs to 504 residues: Probable cytosol aminopeptidase (504 aa).

Mn(2+) contacts are provided by lysine 274 and aspartate 279. Residue lysine 286 is part of the active site. Residues aspartate 297, aspartate 356, and glutamate 358 each coordinate Mn(2+). Arginine 360 is an active-site residue.

The protein belongs to the peptidase M17 family. Requires Mn(2+) as cofactor.

Its subcellular location is the cytoplasm. The enzyme catalyses Release of an N-terminal amino acid, Xaa-|-Yaa-, in which Xaa is preferably Leu, but may be other amino acids including Pro although not Arg or Lys, and Yaa may be Pro. Amino acid amides and methyl esters are also readily hydrolyzed, but rates on arylamides are exceedingly low.. It catalyses the reaction Release of an N-terminal amino acid, preferentially leucine, but not glutamic or aspartic acids.. Presumably involved in the processing and regular turnover of intracellular proteins. Catalyzes the removal of unsubstituted N-terminal amino acids from various peptides. This chain is Probable cytosol aminopeptidase, found in Blochmanniella floridana.